The sequence spans 331 residues: Tetraacyldisaccharide 4'-kinase (331 aa).

51–58 contacts ATP; sequence TAGGAGKT.

It belongs to the LpxK family.

It carries out the reaction a lipid A disaccharide + ATP = a lipid IVA + ADP + H(+). The protein operates within glycolipid biosynthesis; lipid IV(A) biosynthesis; lipid IV(A) from (3R)-3-hydroxytetradecanoyl-[acyl-carrier-protein] and UDP-N-acetyl-alpha-D-glucosamine: step 6/6. Functionally, transfers the gamma-phosphate of ATP to the 4'-position of a tetraacyldisaccharide 1-phosphate intermediate (termed DS-1-P) to form tetraacyldisaccharide 1,4'-bis-phosphate (lipid IVA). This Rhodospirillum rubrum (strain ATCC 11170 / ATH 1.1.1 / DSM 467 / LMG 4362 / NCIMB 8255 / S1) protein is Tetraacyldisaccharide 4'-kinase.